The chain runs to 746 residues: Zinc finger protein 366 (746 aa).

Positions 1 to 64 (MQKAMKMVKD…FRYEPSPGDL (64 aa)) are disordered. 11 consecutive C2H2-type zinc fingers follow at residues 250–272 (WQCPTCEKSYTSKYNLVTHILGH), 278–300 (HACSRCGKLFKQLSHLHTHMLTH), 306–328 (HKCQVCHKAFTQTSHLKRHMMQH), 334–356 (HNCRVCSRGFAYPSELKAHEAKH), 362–384 (NICVECGLDFPTLAQLKRHLTTH), 390–412 (YNCSECDKTFQYPSQLQNHMMKH), 418–440 (YICSECGMEFVQPHHLKQHSLTH), 446–468 (HKCGICGREFTLLANMKRHVLIH), 474–496 (YQCHLCYKSFVQKQTLKAHMIVH), 502–524 (FKCKLCGKEFNRMHNLMGHLHLH), and 530–553 (FKCLYCPSKFTLKGNLTRHMKVKH). The interaction with NRIP1 stretch occupies residues 452 to 746 (GREFTLLANM…MEKQAVLLGI (295 aa)). Residues 587-591 (PFDLS) carry the PXDLS motif. A disordered region spans residues 587-689 (PFDLSQKRSA…DHEGSDIDCE (103 aa)). The span at 613–627 (CQEEEEEAGEEDNCY) shows a compositional bias: acidic residues. The segment covering 675 to 689 (EDRSEDHEGSDIDCE) has biased composition (basic and acidic residues).

In terms of assembly, interacts with ESR1 and NRIP1. Interacts (via PXDLS motif) with CTBP1. Expressed in immature and mature dendritic cells (DCs).

The protein localises to the nucleus. In terms of biological role, has transcriptional repression activity. Acts as a corepressor of ESR1; the function seems to involve CTBP1 and histone deacetylases. This is Zinc finger protein 366 from Mus musculus (Mouse).